Consider the following 344-residue polypeptide: AI-2 transport protein TqsA (344 aa).

Topologically, residues 1 to 4 (MAKP) are cytoplasmic. Residues 5-25 (IITLNGLKIVIMLGMLVIILC) traverse the membrane as a helical segment. At 26–30 (GIRFA) the chain is on the periplasmic side. A helical membrane pass occupies residues 31–51 (AEIIVPFILALFIAVILNPLV). The Cytoplasmic portion of the chain corresponds to 52–61 (QHMVRWRVPR). The chain crosses the membrane as a helical span at residues 62-82 (VLAVSILMTIIVMAMVLLLAY). At 83-149 (LGSALNELTR…LLTQLSNAMS (67 aa)) the chain is on the periplasmic side. Residues 150 to 170 (SIFLLLLTVLFMLLEVPQLPG) form a helical membrane-spanning segment. Residues 171–196 (KFQQMMARPVEGMAAIQRAIDSVSHY) lie on the Cytoplasmic side of the membrane. A helical transmembrane segment spans residues 197 to 217 (LVLKTAISIITGLVAWAMLAA). At 218–221 (LDVR) the chain is on the periplasmic side. The chain crosses the membrane as a helical span at residues 222–242 (FAFVWGLLAFALNYIPNIGSV). Over 243–257 (LAAIPPIAQVLVFNG) the chain is Cytoplasmic. A helical transmembrane segment spans residues 258–278 (FYEALLVLAGYLLINLVFGNI). At 279-292 (LEPRIMGRGLGLST) the chain is on the periplasmic side. Residues 293 to 313 (LVVFLSLIFWGWLLGPVGMLL) traverse the membrane as a helical segment. Topologically, residues 314-344 (SVPLTIIVKIALEQTAGGQSIAVLLSDLNKE) are cytoplasmic.

It belongs to the autoinducer-2 exporter (AI-2E) (TC 2.A.86) family.

The protein localises to the cell inner membrane. It catalyses the reaction (2R,4S)-2-methyltetrahydrofuran-2,3,3,4-tetrol(in) = (2R,4S)-2-methyltetrahydrofuran-2,3,3,4-tetrol(out). Functionally, involved in the transport of the quorum-sensing signal autoinducer 2 (AI-2). Controls the transport of AI-2 either by enhancing its secretion or inhibiting its uptake and consequently represses biofilm formation and motility and affects the global gene expression in biofilms. The polypeptide is AI-2 transport protein TqsA (Escherichia coli (strain K12)).